The sequence spans 954 residues: Centrosomal protein of 112 kDa (954 aa).

Residues 276–954 (QKHDAEVQKI…EELTTYQSRR (679 aa)) are a coiled coil.

The protein localises to the cytoplasm. It localises to the cytoskeleton. It is found in the microtubule organizing center. Its subcellular location is the centrosome. The protein is Centrosomal protein of 112 kDa (Cep112) of Mus musculus (Mouse).